A 352-amino-acid polypeptide reads, in one-letter code: Nodal homolog 4-B (352 aa).

An N-terminal signal peptide occupies residues 1–18 (MHLYFSCFILLFVPGGKS). A propeptide spanning residues 19–278 (LGINSHLKHM…TIANSRRHRR (260 aa)) is cleaved from the precursor. Asn30, Asn37, Asn199, and Asn238 each carry an N-linked (GlcNAc...) asparagine glycan. The tract at residues 197–223 (GKNHSEGHMKQPKKLHRAKSAERRYQQ) is disordered.

Belongs to the TGF-beta family. Homodimer; disulfide-linked.

The protein localises to the secreted. In terms of biological role, cooperation and regulatory loops of multiple nodals are essential for mesendoderm patterning in early embryos. Plays a role in mesoderm formation and may be required for neural development. The chain is Nodal homolog 4-B (nodal4-b) from Xenopus laevis (African clawed frog).